The primary structure comprises 306 residues: Ribonuclease Z (306 aa).

His63, His65, Asp67, His68, His140, Asp211, and His269 together coordinate Zn(2+). Asp67 functions as the Proton acceptor in the catalytic mechanism.

This sequence belongs to the RNase Z family. Homodimer. The cofactor is Zn(2+).

The enzyme catalyses Endonucleolytic cleavage of RNA, removing extra 3' nucleotides from tRNA precursor, generating 3' termini of tRNAs. A 3'-hydroxy group is left at the tRNA terminus and a 5'-phosphoryl group is left at the trailer molecule.. Its function is as follows. Zinc phosphodiesterase, which displays some tRNA 3'-processing endonuclease activity. Probably involved in tRNA maturation, by removing a 3'-trailer from precursor tRNA. This is Ribonuclease Z from Listeria monocytogenes serotype 4a (strain HCC23).